We begin with the raw amino-acid sequence, 126 residues long: MAIIGLGTDIVEISRIEAVVERSGEKLARRILSPAEWQHYQQHQQPIRFLAKRFAVKEAAAKAFGTGIRNGLAFNQFEVVNDALGKPTLRLHQRAAELAAELGVKSLHVTLADERRYACATVIIES.

The Mg(2+) site is built by aspartate 9 and glutamate 58.

This sequence belongs to the P-Pant transferase superfamily. AcpS family. It depends on Mg(2+) as a cofactor.

The protein resides in the cytoplasm. It carries out the reaction apo-[ACP] + CoA = holo-[ACP] + adenosine 3',5'-bisphosphate + H(+). In terms of biological role, transfers the 4'-phosphopantetheine moiety from coenzyme A to a Ser of acyl-carrier-protein. The polypeptide is Holo-[acyl-carrier-protein] synthase (Yersinia enterocolitica serotype O:8 / biotype 1B (strain NCTC 13174 / 8081)).